We begin with the raw amino-acid sequence, 52 residues long: UPF0391 membrane protein XOO4217 (52 aa).

2 helical membrane-spanning segments follow: residues 5–25 and 27–47; these read AMIFFVIAIIAAVLGFSGIAG and ATNIAWILFVVFLILAVISMF.

This sequence belongs to the UPF0391 family.

It localises to the cell membrane. This is UPF0391 membrane protein XOO4217 from Xanthomonas oryzae pv. oryzae (strain KACC10331 / KXO85).